Consider the following 246-residue polypeptide: Acetoacetate decarboxylase (246 aa).

The active-site Schiff-base intermediate with acetoacetate is the lysine 116.

It belongs to the ADC family.

The enzyme catalyses acetoacetate + H(+) = acetone + CO2. Catalyzes the conversion of acetoacetate to acetone and carbon dioxide. In Burkholderia multivorans (strain ATCC 17616 / 249), this protein is Acetoacetate decarboxylase.